A 223-amino-acid chain; its full sequence is Phosphoribosylformylglycinamidine synthase subunit PurQ (223 aa).

A Glutamine amidotransferase type-1 domain is found at 2-223; the sequence is KIAVVVFPGS…KSLLKAGVQA (222 aa). The active-site Nucleophile is the Cys-86. Residues His-195 and Glu-197 contribute to the active site.

Part of the FGAM synthase complex composed of 1 PurL, 1 PurQ and 2 PurS subunits.

It localises to the cytoplasm. The catalysed reaction is N(2)-formyl-N(1)-(5-phospho-beta-D-ribosyl)glycinamide + L-glutamine + ATP + H2O = 2-formamido-N(1)-(5-O-phospho-beta-D-ribosyl)acetamidine + L-glutamate + ADP + phosphate + H(+). The enzyme catalyses L-glutamine + H2O = L-glutamate + NH4(+). The protein operates within purine metabolism; IMP biosynthesis via de novo pathway; 5-amino-1-(5-phospho-D-ribosyl)imidazole from N(2)-formyl-N(1)-(5-phospho-D-ribosyl)glycinamide: step 1/2. In terms of biological role, part of the phosphoribosylformylglycinamidine synthase complex involved in the purines biosynthetic pathway. Catalyzes the ATP-dependent conversion of formylglycinamide ribonucleotide (FGAR) and glutamine to yield formylglycinamidine ribonucleotide (FGAM) and glutamate. The FGAM synthase complex is composed of three subunits. PurQ produces an ammonia molecule by converting glutamine to glutamate. PurL transfers the ammonia molecule to FGAR to form FGAM in an ATP-dependent manner. PurS interacts with PurQ and PurL and is thought to assist in the transfer of the ammonia molecule from PurQ to PurL. In Lactobacillus acidophilus (strain ATCC 700396 / NCK56 / N2 / NCFM), this protein is Phosphoribosylformylglycinamidine synthase subunit PurQ.